The chain runs to 194 residues: Amidophosphoribosyltransferase (194 aa).

Positions 1 to 11 (MPHEPKGLNEE) are excised as a propeptide. Catalysis depends on Cys12, which acts as the Nucleophile. The Glutamine amidotransferase type-2 domain maps to 12-194 (CGVFGVWGNP…PHGFRPMVVG (183 aa)).

It in the C-terminal section; belongs to the purine/pyrimidine phosphoribosyltransferase family.

It catalyses the reaction 5-phospho-beta-D-ribosylamine + L-glutamate + diphosphate = 5-phospho-alpha-D-ribose 1-diphosphate + L-glutamine + H2O. Its pathway is purine metabolism; IMP biosynthesis via de novo pathway; N(1)-(5-phospho-D-ribosyl)glycinamide from 5-phospho-alpha-D-ribose 1-diphosphate: step 1/2. In terms of biological role, catalyzes the formation of phosphoribosylamine from phosphoribosylpyrophosphate (PRPP) and glutamine. This is Amidophosphoribosyltransferase from Lacticaseibacillus casei (Lactobacillus casei).